The chain runs to 481 residues: Protein nucleotidyltransferase YdiU (481 aa).

Positions 85, 87, 88, 108, 120, 121, 172, and 179 each coordinate ATP. The active-site Proton acceptor is the aspartate 248. Asparagine 249 and aspartate 258 together coordinate Mg(2+). Aspartate 258 provides a ligand contact to ATP.

Belongs to the SELO family. Mg(2+) is required as a cofactor. Requires Mn(2+) as cofactor.

The enzyme catalyses L-seryl-[protein] + ATP = 3-O-(5'-adenylyl)-L-seryl-[protein] + diphosphate. The catalysed reaction is L-threonyl-[protein] + ATP = 3-O-(5'-adenylyl)-L-threonyl-[protein] + diphosphate. It catalyses the reaction L-tyrosyl-[protein] + ATP = O-(5'-adenylyl)-L-tyrosyl-[protein] + diphosphate. It carries out the reaction L-histidyl-[protein] + UTP = N(tele)-(5'-uridylyl)-L-histidyl-[protein] + diphosphate. The enzyme catalyses L-seryl-[protein] + UTP = O-(5'-uridylyl)-L-seryl-[protein] + diphosphate. The catalysed reaction is L-tyrosyl-[protein] + UTP = O-(5'-uridylyl)-L-tyrosyl-[protein] + diphosphate. Functionally, nucleotidyltransferase involved in the post-translational modification of proteins. It can catalyze the addition of adenosine monophosphate (AMP) or uridine monophosphate (UMP) to a protein, resulting in modifications known as AMPylation and UMPylation. The sequence is that of Protein nucleotidyltransferase YdiU from Cereibacter sphaeroides (strain KD131 / KCTC 12085) (Rhodobacter sphaeroides).